The primary structure comprises 333 residues: Phenylalanine--tRNA ligase alpha subunit (333 aa).

Residue Glu254 coordinates Mg(2+).

Belongs to the class-II aminoacyl-tRNA synthetase family. Phe-tRNA synthetase alpha subunit type 1 subfamily. As to quaternary structure, tetramer of two alpha and two beta subunits. It depends on Mg(2+) as a cofactor.

Its subcellular location is the cytoplasm. The catalysed reaction is tRNA(Phe) + L-phenylalanine + ATP = L-phenylalanyl-tRNA(Phe) + AMP + diphosphate + H(+). This chain is Phenylalanine--tRNA ligase alpha subunit, found in Xylella fastidiosa (strain M12).